The primary structure comprises 518 residues: Probable cyclic di-GMP phosphodiesterase PdeN (518 aa).

A run of 2 helical transmembrane segments spans residues C16–W36 and V236–Y256. Residues R261–Y514 enclose the EAL domain.

The protein resides in the cell inner membrane. The enzyme catalyses 3',3'-c-di-GMP + H2O = 5'-phosphoguanylyl(3'-&gt;5')guanosine + H(+). Functionally, phosphodiesterase (PDE) that catalyzes the hydrolysis of cyclic-di-GMP (c-di-GMP) to 5'-pGpG. The polypeptide is Probable cyclic di-GMP phosphodiesterase PdeN (Escherichia coli (strain K12)).